The following is a 381-amino-acid chain: Dynactin subunit 2 (381 aa).

Residues 15–39 (DQPDVYETPDAPESETSDFYDEEPA) form a disordered region. Residues 24–39 (DAPESETSDFYDEEPA) show a composition bias toward acidic residues. Coiled coils occupy residues 100–216 (QKCL…AVGA) and 350–381 (GVQE…EKVK).

It belongs to the dynactin subunit 2 family. In terms of assembly, subunit of dynactin, a multiprotein complex associated with dynein.

It localises to the cytoplasm. The protein resides in the cytoskeleton. The protein localises to the membrane. Its function is as follows. Modulates cytoplasmic dynein binding to an organelle, and plays a role in prometaphase chromosome alignment and spindle organization during mitosis. The sequence is that of Dynactin subunit 2 from Aedes aegypti (Yellowfever mosquito).